Consider the following 163-residue polypeptide: Myosin light chain 2 (163 aa).

2 consecutive EF-hand domains span residues Asp-15–Thr-50 and Pro-92–Glu-127. Residues Asp-28, Asp-30, Asp-32, and Asp-39 each coordinate Ca(2+).

In terms of assembly, interacts with the IQ domain of MYO1.

Its subcellular location is the bud neck. Its function is as follows. Regulatory light chain for the class II conventional myosin MYO1. May play a role in the disassembly of the MYO1 ring at the bud neck at the end of its contraction during cytokinesis. The protein is Myosin light chain 2 (MLC2) of Saccharomyces cerevisiae (strain ATCC 204508 / S288c) (Baker's yeast).